A 27-amino-acid polypeptide reads, in one-letter code: Ganodermin (27 aa).

Its function is as follows. Has antifungal activity against B.cinera, F.oxysporum and P.piricola with IC(50) values of 15.2 uM, 12.4 uM and 18.1 uM, respectively. Lacks hemagglutinating activity towards rabbit erythrocytes. Lacks deoxyribonuclease, ribonuclease and protease inhibitory activities. The sequence is that of Ganodermin from Ganoderma lucidum (Ling zhi medicinal fungus).